The sequence spans 189 residues: Putative 3-methyladenine DNA glycosylase (189 aa).

The protein belongs to the DNA glycosylase MPG family.

This chain is Putative 3-methyladenine DNA glycosylase (mag), found in Corynebacterium glutamicum (strain ATCC 13032 / DSM 20300 / JCM 1318 / BCRC 11384 / CCUG 27702 / LMG 3730 / NBRC 12168 / NCIMB 10025 / NRRL B-2784 / 534).